We begin with the raw amino-acid sequence, 256 residues long: Cell division protein DivIB (256 aa).

Residues 1–23 (MSKDLISTDEYIKIKKKRKRIKK) lie on the Cytoplasmic side of the membrane. The chain crosses the membrane as a helical span at residues 24 to 44 (IVVLFIFLISILVTLCLKIPY). A POTRA domain is found at 45 to 113 (FNIESIEIKG…NKLQIYVKER (69 aa)). Over 45–256 (FNIESIEIKG…EGNPVFYIEK (212 aa)) the chain is Extracellular.

Belongs to the FtsQ/DivIB family. DivIB subfamily.

Its subcellular location is the cell membrane. In terms of biological role, cell division protein that may be involved in stabilizing or promoting the assembly of the division complex. This Clostridium botulinum (strain Hall / ATCC 3502 / NCTC 13319 / Type A) protein is Cell division protein DivIB.